The primary structure comprises 107 residues: UPF0145 protein PC1_1703 (107 aa).

The protein belongs to the UPF0145 family.

The polypeptide is UPF0145 protein PC1_1703 (Pectobacterium carotovorum subsp. carotovorum (strain PC1)).